A 194-amino-acid polypeptide reads, in one-letter code: Histone H1.0 (194 aa).

N-acetylmethionine is present on Met1. Residues 1 to 26 are disordered; that stretch reads MTENSTSTPAAKPKRAKAAKKSTDHP. Thr2 is modified (N-acetylthreonine; in Histone H1.0, N-terminally processed). Residues 24–97 form the H15 domain; it reads DHPKYSDMIV…GASGSFRLAK (74 aa). Arg42 is subject to Citrulline. The interval 86 to 194 is disordered; the sequence is GVGASGSFRL…SSAKRASKKK (109 aa). Ser104 bears the ADP-ribosylserine mark. Residues 105–194 show a composition bias toward basic residues; the sequence is VAFKKTKKEV…SSAKRASKKK (90 aa).

This sequence belongs to the histone H1/H5 family. In terms of processing, ADP-ribosylated on Ser-104 in response to DNA damage.

It localises to the nucleus. Its subcellular location is the chromosome. Functionally, histones H1 are necessary for the condensation of nucleosome chains into higher-order structures. The histones H1.0 are found in cells that are in terminal stages of differentiation or that have low rates of cell division. This is Histone H1.0 (H1-0) from Rattus norvegicus (Rat).